The following is an 881-amino-acid chain: Probable alpha/beta-glucosidase agdC (881 aa).

The N-terminal stretch at 1–14 (MLRSLLLLAPLVGA) is a signal peptide. 3 N-linked (GlcNAc...) asparagine glycosylation sites follow: asparagine 171, asparagine 293, and asparagine 373. Aspartate 422 serves as the catalytic Nucleophile. Glutamate 425 is a catalytic residue. The segment at 440–485 (YARDNDLPPAAPPVRPSNPRPLPGFPGDFQPSSSSKRSTKGSKVGL) is disordered. The segment covering 448–463 (PAAPPVRPSNPRPLPG) has biased composition (pro residues). Residue asparagine 506 is glycosylated (N-linked (GlcNAc...) asparagine). Aspartate 571 acts as the Proton donor in catalysis. N-linked (GlcNAc...) asparagine glycans are attached at residues asparagine 572, asparagine 608, and asparagine 742.

It belongs to the glycosyl hydrolase 31 family.

Its subcellular location is the secreted. It carries out the reaction Hydrolysis of terminal, non-reducing (1-&gt;4)-linked alpha-D-glucose residues with release of alpha-D-glucose.. The enzyme catalyses Hydrolysis of terminal, non-reducing beta-D-glucosyl residues with release of beta-D-glucose.. Functionally, glucosidase involved in the degradation of cellulosic biomass. Has both alpha- and beta-glucosidase activity. This chain is Probable alpha/beta-glucosidase agdC (agdC), found in Aspergillus fumigatus (strain CBS 144.89 / FGSC A1163 / CEA10) (Neosartorya fumigata).